Here is a 340-residue protein sequence, read N- to C-terminus: Peroxisomal adenine nucleotide transporter 1 (340 aa).

Solcar repeat units follow at residues glutamate 4–histidine 119, phenylalanine 133–alanine 218, and leucine 236–methionine 320. The next 6 membrane-spanning stretches (helical) occupy residues alanine 6–alanine 26, glycine 96–valine 116, leucine 139–valine 159, glycine 190–alanine 210, phenylalanine 242–alanine 262, and tryptophan 293–phenylalanine 313.

This sequence belongs to the mitochondrial carrier (TC 2.A.29) family.

The protein localises to the peroxisome membrane. Its function is as follows. Adenine nucleotide transporter involved in the uniport of ATP and adenine nucleotide hetero-exchange transport between the cytosol and the peroxisomal lumen. This transport is accompanied by a proton transport from the peroxisomal lumen to the cytosol. Transport of ATP into the peroxisome is required for beta-oxidation of medium-chain fatty acids. This Eremothecium gossypii (strain ATCC 10895 / CBS 109.51 / FGSC 9923 / NRRL Y-1056) (Yeast) protein is Peroxisomal adenine nucleotide transporter 1 (ANT1).